The primary structure comprises 253 residues: Triosephosphate isomerase (253 aa).

9–11 contacts substrate; that stretch reads NWK. The Electrophile role is filled by His95. Residue Glu167 is the Proton acceptor of the active site. Substrate-binding positions include Gly173, Ser213, and 234–235; that span reads GG. Ser213 is subject to Phosphoserine.

The protein belongs to the triosephosphate isomerase family. As to quaternary structure, homodimer.

It localises to the cytoplasm. It carries out the reaction D-glyceraldehyde 3-phosphate = dihydroxyacetone phosphate. It functions in the pathway carbohydrate biosynthesis; gluconeogenesis. Its pathway is carbohydrate degradation; glycolysis; D-glyceraldehyde 3-phosphate from glycerone phosphate: step 1/1. Functionally, involved in the gluconeogenesis. Catalyzes stereospecifically the conversion of dihydroxyacetone phosphate (DHAP) to D-glyceraldehyde-3-phosphate (G3P). The sequence is that of Triosephosphate isomerase from Bacillus pumilus (strain SAFR-032).